We begin with the raw amino-acid sequence, 513 residues long: Glutamyl-tRNA(Gln) amidotransferase subunit A (513 aa).

Residues lysine 85 and serine 160 each act as charge relay system in the active site. Residue serine 184 is the Acyl-ester intermediate of the active site.

It belongs to the amidase family. GatA subfamily. In terms of assembly, heterotrimer of A, B and C subunits.

The enzyme catalyses L-glutamyl-tRNA(Gln) + L-glutamine + ATP + H2O = L-glutaminyl-tRNA(Gln) + L-glutamate + ADP + phosphate + H(+). Its function is as follows. Allows the formation of correctly charged Gln-tRNA(Gln) through the transamidation of misacylated Glu-tRNA(Gln) in organisms which lack glutaminyl-tRNA synthetase. The reaction takes place in the presence of glutamine and ATP through an activated gamma-phospho-Glu-tRNA(Gln). This Bifidobacterium longum subsp. infantis (strain ATCC 15697 / DSM 20088 / JCM 1222 / NCTC 11817 / S12) protein is Glutamyl-tRNA(Gln) amidotransferase subunit A.